A 339-amino-acid polypeptide reads, in one-letter code: Dihydroorotase (339 aa).

2 residues coordinate Zn(2+): His-12 and His-14. Residues 14-16 (HVR) and Asn-40 each bind substrate. Zn(2+) is bound by residues Lys-94, His-133, His-167, and Asp-239. Lys-94 is modified (N6-carboxylysine). Residue His-133 coordinates substrate. Asp-239 is an active-site residue. The substrate site is built by His-243 and Ala-255.

The protein belongs to the metallo-dependent hydrolases superfamily. DHOase family. Class II DHOase subfamily. As to quaternary structure, homodimer. Zn(2+) serves as cofactor.

It carries out the reaction (S)-dihydroorotate + H2O = N-carbamoyl-L-aspartate + H(+). It functions in the pathway pyrimidine metabolism; UMP biosynthesis via de novo pathway; (S)-dihydroorotate from bicarbonate: step 3/3. In terms of biological role, catalyzes the reversible cyclization of carbamoyl aspartate to dihydroorotate. This is Dihydroorotase from Helicobacter acinonychis (strain Sheeba).